The sequence spans 200 residues: Transcriptional repressor NrdR (200 aa).

The segment at 3-34 is a zinc-finger region; sequence CPFCQNPDTKVIDTRISDDGHSIRRRRECPNC. The region spanning 46 to 136 is the ATP-cone domain; sequence LLVKKRSGNV…VYQNFEDLED (91 aa).

It belongs to the NrdR family. Zn(2+) is required as a cofactor.

Negatively regulates transcription of bacterial ribonucleotide reductase nrd genes and operons by binding to NrdR-boxes. In Bifidobacterium animalis subsp. lactis (strain AD011), this protein is Transcriptional repressor NrdR.